A 194-amino-acid polypeptide reads, in one-letter code: Large ribosomal subunit protein eL15 (194 aa).

The interval 164–194 (SAGKKGRGLRNKGKGAEKIRPSIRANEGKGK) is disordered. Basic residues predominate over residues 167–176 (KKGRGLRNKG). Residues 177–194 (KGAEKIRPSIRANEGKGK) show a composition bias toward basic and acidic residues.

The protein belongs to the eukaryotic ribosomal protein eL15 family.

The protein is Large ribosomal subunit protein eL15 (rpl15e) of Pyrococcus abyssi (strain GE5 / Orsay).